A 304-amino-acid polypeptide reads, in one-letter code: Release factor glutamine methyltransferase (304 aa).

Residues aspartate 144 and asparagine 188 each contribute to the S-adenosyl-L-methionine site. Substrate is bound at residue 188-191; that stretch reads NPPY.

Belongs to the protein N5-glutamine methyltransferase family. PrmC subfamily.

The catalysed reaction is L-glutaminyl-[peptide chain release factor] + S-adenosyl-L-methionine = N(5)-methyl-L-glutaminyl-[peptide chain release factor] + S-adenosyl-L-homocysteine + H(+). Functionally, methylates the class 1 translation termination release factors RF1/PrfA and RF2/PrfB on the glutamine residue of the universally conserved GGQ motif. The sequence is that of Release factor glutamine methyltransferase from Mycobacterium tuberculosis (strain CDC 1551 / Oshkosh).